The primary structure comprises 671 residues: UvrABC system protein B (671 aa).

One can recognise a Helicase ATP-binding domain in the interval 25–412 (EGIDAGLAHQ…AGRIVEQVVR (388 aa)). 38-45 (GVTGSGKT) contributes to the ATP binding site. Residues 91–114 (YYDYYQPEAYVPSSDTFIEKDASI) carry the Beta-hairpin motif. The 154-residue stretch at 429–582 (QVDDLLSEIH…QIAFNLEHGI (154 aa)) folds into the Helicase C-terminal domain. Residues 601–625 (PGSRSKKRKGMAKAAEESARYENEL) are disordered. Residues 614 to 625 (AAEESARYENEL) are compositionally biased toward basic and acidic residues. The UVR domain occupies 632–667 (NKRIRQLEEKMYQLARDLEFEAAAQMRDEIGKLRER).

It belongs to the UvrB family. In terms of assembly, forms a heterotetramer with UvrA during the search for lesions. Interacts with UvrC in an incision complex.

The protein localises to the cytoplasm. In terms of biological role, the UvrABC repair system catalyzes the recognition and processing of DNA lesions. A damage recognition complex composed of 2 UvrA and 2 UvrB subunits scans DNA for abnormalities. Upon binding of the UvrA(2)B(2) complex to a putative damaged site, the DNA wraps around one UvrB monomer. DNA wrap is dependent on ATP binding by UvrB and probably causes local melting of the DNA helix, facilitating insertion of UvrB beta-hairpin between the DNA strands. Then UvrB probes one DNA strand for the presence of a lesion. If a lesion is found the UvrA subunits dissociate and the UvrB-DNA preincision complex is formed. This complex is subsequently bound by UvrC and the second UvrB is released. If no lesion is found, the DNA wraps around the other UvrB subunit that will check the other stand for damage. In Pseudomonas syringae pv. tomato (strain ATCC BAA-871 / DC3000), this protein is UvrABC system protein B.